The following is a 354-amino-acid chain: MDDNKKKALAAALGQIERQFGKGAVMRMGDHDRQAIPAISTGSLGLDIALGIGGLPKGRIVEIYGPESSGKTTLTLSVIAQAQKMGATCAFVDAEHALDPEYAGKLGVNVDDLLVSQPDTGEQALEITDMLVRSNAIDVIVVDSVAALVPKAEIEGEMGDMHVGLQARLMSQALRKITGNIKNANCLVIFINQIRMKIGVMFGSPETTTGGNALKFYASVRLDIRRTGAVKEGDEVVGSETRVKVVKNKVAPPFRQAEFQILYGKGIYLNGEIVDLAVLHGFVEKSGAWYSYQGSKIGQGKANSAKFLADNPEICKALEKQIRDKLLTPGVDTKAVGSREAVAADDMSEADVDI.

65–72 (GPESSGKT) serves as a coordination point for ATP.

Belongs to the RecA family.

It localises to the cytoplasm. Functionally, can catalyze the hydrolysis of ATP in the presence of single-stranded DNA, the ATP-dependent uptake of single-stranded DNA by duplex DNA, and the ATP-dependent hybridization of homologous single-stranded DNAs. It interacts with LexA causing its activation and leading to its autocatalytic cleavage. The polypeptide is Protein RecA (Pseudomonas syringae pv. syringae (strain B728a)).